A 288-amino-acid chain; its full sequence is Polyamine aminopropyltransferase (288 aa).

Residues 9-238 enclose the PABS domain; sequence ETLHDQFGQY…GIMTFAWATD (230 aa). Gln33 provides a ligand contact to S-methyl-5'-thioadenosine. Spermidine is bound by residues His64 and Asp88. S-methyl-5'-thioadenosine-binding positions include Glu108 and 140 to 141; that span reads DG. Asp158 functions as the Proton acceptor in the catalytic mechanism. Residue 158-161 participates in spermidine binding; sequence DCTD. Pro165 contacts S-methyl-5'-thioadenosine.

The protein belongs to the spermidine/spermine synthase family. As to quaternary structure, homodimer or homotetramer.

Its subcellular location is the cytoplasm. It carries out the reaction S-adenosyl 3-(methylsulfanyl)propylamine + putrescine = S-methyl-5'-thioadenosine + spermidine + H(+). It functions in the pathway amine and polyamine biosynthesis; spermidine biosynthesis; spermidine from putrescine: step 1/1. In terms of biological role, catalyzes the irreversible transfer of a propylamine group from the amino donor S-adenosylmethioninamine (decarboxy-AdoMet) to putrescine (1,4-diaminobutane) to yield spermidine. This chain is Polyamine aminopropyltransferase, found in Escherichia coli (strain UTI89 / UPEC).